Reading from the N-terminus, the 330-residue chain is tRNA(Ile)-lysidine synthase (330 aa).

S31–S36 contacts ATP.

It belongs to the tRNA(Ile)-lysidine synthase family.

The protein resides in the cytoplasm. The enzyme catalyses cytidine(34) in tRNA(Ile2) + L-lysine + ATP = lysidine(34) in tRNA(Ile2) + AMP + diphosphate + H(+). Functionally, ligates lysine onto the cytidine present at position 34 of the AUA codon-specific tRNA(Ile) that contains the anticodon CAU, in an ATP-dependent manner. Cytidine is converted to lysidine, thus changing the amino acid specificity of the tRNA from methionine to isoleucine. The chain is tRNA(Ile)-lysidine synthase from Synechocystis sp. (strain ATCC 27184 / PCC 6803 / Kazusa).